Reading from the N-terminus, the 911-residue chain is DNA ligase 4 (911 aa).

ATP-binding residues include E271, T272, K273, L274, R278, E331, K345, F367, E427, K432, K449, and K451. K273 serves as the catalytic N6-AMP-lysine intermediate. E331 contacts Mg(2+). E427 provides a ligand contact to Mg(2+). Positions 610–620 (LASKHLYIGGD) are required for catalytic activity. 2 consecutive BRCT domains span residues 654–743 (KISN…PRFM) and 808–911 (SPLS…QYLI).

It belongs to the ATP-dependent DNA ligase family. In terms of assembly, interacts with XRCC4; the LIG4-XRCC4 subcomplex has a 1:2 stoichiometry and XRCC4 is required for LIG4 stability. Component of the core long-range non-homologous end joining (NHEJ) complex (also named DNA-PK complex) composed of PRKDC, LIG4, XRCC4, XRCC6/Ku70, XRCC5/Ku86 and NHEJ1/XLF. Additional component of the NHEJ complex includes PAXX. Following autophosphorylation, PRKDC dissociates from DNA, leading to formation of the short-range NHEJ complex, composed of LIG4, XRCC4, XRCC6/Ku70, XRCC5/Ku86 and NHEJ1/XLF. Interacts with DCLRE1C; the interaction is direct. Interacts with APLF. Mg(2+) is required as a cofactor. Testis, thymus, prostate and heart.

The protein localises to the nucleus. It catalyses the reaction ATP + (deoxyribonucleotide)n-3'-hydroxyl + 5'-phospho-(deoxyribonucleotide)m = (deoxyribonucleotide)n+m + AMP + diphosphate.. DNA ligase involved in DNA non-homologous end joining (NHEJ); required for double-strand break (DSB) repair and V(D)J recombination. Catalyzes the NHEJ ligation step of the broken DNA during DSB repair by resealing the DNA breaks after the gap filling is completed. Joins single-strand breaks in a double-stranded polydeoxynucleotide in an ATP-dependent reaction. LIG4 is mechanistically flexible: it can ligate nicks as well as compatible DNA overhangs alone, while in the presence of XRCC4, it can ligate ends with 2-nucleotides (nt) microhomology and 1-nt gaps. Forms a subcomplex with XRCC4; the LIG4-XRCC4 subcomplex is responsible for the NHEJ ligation step and XRCC4 enhances the joining activity of LIG4. Binding of the LIG4-XRCC4 complex to DNA ends is dependent on the assembly of the DNA-dependent protein kinase complex DNA-PK to these DNA ends. LIG4 regulates nuclear localization of XRCC4. This Homo sapiens (Human) protein is DNA ligase 4.